Here is a 608-residue protein sequence, read N- to C-terminus: DNA mismatch repair protein MutL (608 aa).

This sequence belongs to the DNA mismatch repair MutL/HexB family.

In terms of biological role, this protein is involved in the repair of mismatches in DNA. It is required for dam-dependent methyl-directed DNA mismatch repair. May act as a 'molecular matchmaker', a protein that promotes the formation of a stable complex between two or more DNA-binding proteins in an ATP-dependent manner without itself being part of a final effector complex. This Anoxybacillus flavithermus (strain DSM 21510 / WK1) protein is DNA mismatch repair protein MutL.